Reading from the N-terminus, the 1008-residue chain is P3N-PIPO polyprotein (1008 aa).

One can recognise a Peptidase S30 domain in the interval 180-322; sequence QRANADVDHL…ECSKDKIHQY (143 aa). Active-site for P1 proteinase activity residues include His-233, Glu-242, and Ser-275. Positions 374–377 match the Involved in interaction with stylet and aphid transmission motif; sequence KVSC. The short motif at 631–633 is the Involved in virions binding and aphid transmission element; it reads PTK. The Peptidase C6 domain occupies 657 to 779; it reads MYVAKEGYCY…VSEMKHYVVG (123 aa). Residues Cys-665 and His-738 each act as for helper component proteinase activity in the active site.

It belongs to the potyviridae P3N-PIPO polyprotein family. In terms of assembly, interacts (via PIPO domain) with host PCaP1 protein; this interaction may help to anchor the movement complex to the plasma membrane from which the complex could move to the plasmodesmata. Potyviral RNA is expressed as two polyproteins which undergo post-translational proteolytic processing. Genome polyprotein is processed by NIa-pro, P1 and HC-pro proteinases resulting in the production of at least ten individual proteins. P3N-PIPO is cleaved by P1 and HC-pro proteinases resulting in the production of three individual proteins. The P1 proteinase and the HC-pro cleave only their respective C-termini autocatalytically.

Its subcellular location is the host cell junction. It is found in the host plasmodesma. It catalyses the reaction Hydrolyzes a Gly-|-Gly bond at its own C-terminus, commonly in the sequence -Tyr-Xaa-Val-Gly-|-Gly, in the processing of the potyviral polyprotein.. Functionally, required for aphid transmission and also has proteolytic activity. Only cleaves a Gly-Gly dipeptide at its own C-terminus. Interacts with virions and aphid stylets. Acts as a suppressor of RNA-mediated gene silencing, also known as post-transcriptional gene silencing (PTGS), a mechanism of plant viral defense that limits the accumulation of viral RNAs. May have RNA-binding activity. Allows efficient cell to cell propagation, by bypassing the host cell wall barrier. Transports viral genome to neighboring plant cells directly through plasmosdesmata, without any budding. The chain is P3N-PIPO polyprotein from Peanut mottle virus (strain M).